The following is a 317-amino-acid chain: Pantothenate kinase (317 aa).

99-106 (GSVSVGKS) is a binding site for ATP.

Belongs to the prokaryotic pantothenate kinase family.

The protein localises to the cytoplasm. The enzyme catalyses (R)-pantothenate + ATP = (R)-4'-phosphopantothenate + ADP + H(+). It participates in cofactor biosynthesis; coenzyme A biosynthesis; CoA from (R)-pantothenate: step 1/5. The polypeptide is Pantothenate kinase (Histophilus somni (strain 129Pt) (Haemophilus somnus)).